A 2364-amino-acid chain; its full sequence is Actin-binding protein F (2364 aa).

Low complexity predominate over residues 138 to 157 (THQTSPTTETTTTPSSSSSS). Disordered regions lie at residues 138–168 (THQT…STLD), 1087–1111 (QASK…EKRR), 1412–1435 (NNNS…RAPM), and 1929–2088 (KLIS…SEFN). The span at 1092–1111 (NESEVKDEKSMRNRQVEKRR) shows a compositional bias: basic and acidic residues. Composition is skewed to low complexity over residues 1412-1428 (NNNS…NSFG) and 1932-1960 (SSST…TTTD). The stretch at 1960 to 2017 (DSSKDKKKLEKEEKQREKERKQKEKEDKKREKEELKKKEKEEKKKKEEEKKLKKKSGS) forms a coiled coil. Residues 1961-2010 (SSKDKKKLEKEEKQREKERKQKEKEDKKREKEELKKKEKEEKKKKEEEKK) are compositionally biased toward basic and acidic residues. Positions 2027 to 2047 (ATPTTTTTTEATTTTTTTTAT) are enriched in low complexity. Basic and acidic residues predominate over residues 2052–2070 (IKPEKIASDDEHDDHHHDE). A compositionally biased stretch (acidic residues) spans 2071–2081 (HDEEDDDDEPL). A coiled-coil region spans residues 2129 to 2173 (VQRWNSLFKDLRNKVDQVSNKDSVEIDYEKEIDRERRQNKMASNE).

As to quaternary structure, interacts with actin.

It localises to the nucleus. The protein localises to the cytoplasm. It is found in the cytoskeleton. This is Actin-binding protein F (abpF) from Dictyostelium discoideum (Social amoeba).